We begin with the raw amino-acid sequence, 445 residues long: Interferon-activable protein 202 (445 aa).

Residues 1-27 are compositionally biased toward polar residues; it reads MSNRNLRSSTNSEFSEGQHQTPSSDSS. The segment at 1–57 is disordered; that stretch reads MSNRNLRSSTNSEFSEGQHQTPSSDSSGHGEDQPQASPGPNKKSHTPKKNISKGAVL. Over residues 42–51 the composition is skewed to basic residues; that stretch reads KKSHTPKKNI. HIN-200 domains follow at residues 46–243 and 244–441; these read TPKK…IKGE and KLLK…MEVI. Required for homomultimerization stretches follow at residues 82 to 89 and 281 to 288; these read MFHATVAT.

It belongs to the HIN-200 family. Homomultimer; homotetramerizes (via HIN-200 domain 2), enhancing affinity for double-stranded DNA (dsDNA). Interacts (via HIN-200 domain 2) with AIM2 (via HIN-200 domain); preventing activation of the AIM2 inflammasome. Binds to several transcription factors, including NF-kappa-B p50 (NFKB1) and p65 (RELA), FOS, JUN, E2F1, E2F4, MYOD1 and myogenin. Also binds TP53/p53, the hypophosphorylated, growth-inhibitory form of the retinoblastoma protein and the p53-binding protein 1 (TP53BP1). Post-translationally, phosphorylated.

The protein resides in the cytoplasm. It localises to the nucleus. In terms of biological role, DNA-binding protein involved in innate immune response and has anti-inflammatory activity. Inhibits caspase activation in response to cytosolic DNA by preventing activation of the AIM2 inflammasome, probably by sequestering cytoplasmic DNA and preventing its being bound by AIM2. Also inhibits activation of the AIM2 inflammasome via a direct interaction with AIM2, which prevents the interaction between AIM2 and PYCARD and formation of the AIM2 inflammasome. Binds double-stranded DNA (dsDNA) in the cytosol. Has anti-apoptotic effects due to inhibition of the transcriptional activity of TP53/p53. Inhibits the transcriptional activity of several transcription factors, including NF-kappa-B p50 and p65, FOS, JUN, E2F1, E2F4, MYOD1 and myogenin. The sequence is that of Interferon-activable protein 202 from Mus musculus (Mouse).